Here is a 233-residue protein sequence, read N- to C-terminus: Lipoprotein-releasing system ATP-binding protein LolD (233 aa).

The ABC transporter domain occupies 6 to 233 (LQCDNLCKRY…TAELSLMGAE (228 aa)). Residue 42 to 49 (GSSGSGKS) participates in ATP binding.

It belongs to the ABC transporter superfamily. Lipoprotein translocase (TC 3.A.1.125) family. As to quaternary structure, the complex is composed of two ATP-binding proteins (LolD) and two transmembrane proteins (LolC and LolE).

Its subcellular location is the cell inner membrane. In terms of biological role, part of the ABC transporter complex LolCDE involved in the translocation of mature outer membrane-directed lipoproteins, from the inner membrane to the periplasmic chaperone, LolA. Responsible for the formation of the LolA-lipoprotein complex in an ATP-dependent manner. This chain is Lipoprotein-releasing system ATP-binding protein LolD, found in Salmonella paratyphi A (strain ATCC 9150 / SARB42).